Consider the following 470-residue polypeptide: tRNA modification GTPase MnmE (470 aa).

(6S)-5-formyl-5,6,7,8-tetrahydrofolate is bound by residues Arg-24, Glu-81, and Lys-122. Residues 218–383 (GIKIVIAGKP…LQEYLSNNIK (166 aa)) enclose the TrmE-type G domain. K(+) is bound at residue Asn-228. Residues 228–233 (NAGKSS), 247–253 (STISGTT), and 272–275 (DTAG) each bind GTP. Ser-232 contacts Mg(2+). Positions 247, 249, and 252 each coordinate K(+). A Mg(2+)-binding site is contributed by Thr-253. Lys-470 lines the (6S)-5-formyl-5,6,7,8-tetrahydrofolate pocket.

This sequence belongs to the TRAFAC class TrmE-Era-EngA-EngB-Septin-like GTPase superfamily. TrmE GTPase family. As to quaternary structure, homodimer. Heterotetramer of two MnmE and two MnmG subunits. It depends on K(+) as a cofactor.

The protein localises to the cytoplasm. Its function is as follows. Exhibits a very high intrinsic GTPase hydrolysis rate. Involved in the addition of a carboxymethylaminomethyl (cmnm) group at the wobble position (U34) of certain tRNAs, forming tRNA-cmnm(5)s(2)U34. The sequence is that of tRNA modification GTPase MnmE from Blochmanniella pennsylvanica (strain BPEN).